The primary structure comprises 868 residues: Pentatricopeptide repeat-containing protein At2g27610 (868 aa).

PPR repeat units lie at residues 57–91, 92–126, 127–157, 158–192, 193–227, 228–258, 259–293, 294–328, 329–359, 361–395, 396–426, 427–457, 458–492, 493–528, 529–559, 560–594, 595–625, and 631–661; these read DRES…GMEM, DCSI…GFLD, DVSV…MKER, NVVT…GTQP, NSFT…GLDK, TIPV…TEVK, SVVT…YVRL, SESS…GFLF, DQNI…IGCV, NVVS…GVRP, NEFT…NYER, SSTV…IDDK, DIVA…GIKP, NEFT…RLDS, SLCV…QREK, DLVS…KVKM, DGVT…MVRD, and TKEH…MPNP. Positions 666 to 741 are type E motif; it reads IWRTILAACR…EPGYSWIEVK (76 aa). A type E(+) motif region spans residues 742 to 772; the sequence is NKTYSFLAGDRSHPLKDQIYMKLEDLSTRLK. A type DYW motif region spans residues 773–868; sequence DLGYEPDTSY…DGVCSCGDFW (96 aa).

The protein belongs to the PPR family. PCMP-H subfamily.

This chain is Pentatricopeptide repeat-containing protein At2g27610 (PCMP-H60), found in Arabidopsis thaliana (Mouse-ear cress).